The primary structure comprises 270 residues: 4-hydroxy-tetrahydrodipicolinate reductase (270 aa).

NAD(+) is bound by residues 9–14 (GAGGRM) and Glu35. Residue Arg36 coordinates NADP(+). Residues 99 to 101 (GTT) and 123 to 126 (ASNF) each bind NAD(+). The active-site Proton donor/acceptor is His156. His157 contacts (S)-2,3,4,5-tetrahydrodipicolinate. Lys160 serves as the catalytic Proton donor. 166 to 167 (GT) contributes to the (S)-2,3,4,5-tetrahydrodipicolinate binding site.

This sequence belongs to the DapB family.

The protein localises to the cytoplasm. It catalyses the reaction (S)-2,3,4,5-tetrahydrodipicolinate + NAD(+) + H2O = (2S,4S)-4-hydroxy-2,3,4,5-tetrahydrodipicolinate + NADH + H(+). The catalysed reaction is (S)-2,3,4,5-tetrahydrodipicolinate + NADP(+) + H2O = (2S,4S)-4-hydroxy-2,3,4,5-tetrahydrodipicolinate + NADPH + H(+). It functions in the pathway amino-acid biosynthesis; L-lysine biosynthesis via DAP pathway; (S)-tetrahydrodipicolinate from L-aspartate: step 4/4. Catalyzes the conversion of 4-hydroxy-tetrahydrodipicolinate (HTPA) to tetrahydrodipicolinate. This is 4-hydroxy-tetrahydrodipicolinate reductase from Haemophilus influenzae (strain PittEE).